Consider the following 211-residue polypeptide: Urease accessory protein UreE (211 aa).

Residues 134-211 (FDPEGGAYAP…DHHGHGHEHK (78 aa)) are disordered. Over residues 147-202 (PSHDHAGHDHAHDSHAHHDHDHGKHAQHDHGKHDHAHHDHAAHDDHHVHDEHCGHD) the composition is skewed to basic and acidic residues.

Belongs to the UreE family.

It is found in the cytoplasm. Functionally, involved in urease metallocenter assembly. Binds nickel. Probably functions as a nickel donor during metallocenter assembly. In Rhodopseudomonas palustris (strain BisB18), this protein is Urease accessory protein UreE.